Here is a 474-residue protein sequence, read N- to C-terminus: tRNA-2-methylthio-N(6)-dimethylallyladenosine synthase (474 aa).

Positions 3–120 (KKLHIKTWGC…LPEMINSVRG (118 aa)) constitute an MTTase N-terminal domain. C12, C49, C83, C157, C161, and C164 together coordinate [4Fe-4S] cluster. In terms of domain architecture, Radical SAM core spans 143-375 (RAEGPTAFVS…QERINQQAMA (233 aa)). The 64-residue stretch at 378-441 (RRMLGTTQRI…PNSLRGKVVR (64 aa)) folds into the TRAM domain.

It belongs to the methylthiotransferase family. MiaB subfamily. As to quaternary structure, monomer. [4Fe-4S] cluster serves as cofactor.

The protein resides in the cytoplasm. It catalyses the reaction N(6)-dimethylallyladenosine(37) in tRNA + (sulfur carrier)-SH + AH2 + 2 S-adenosyl-L-methionine = 2-methylsulfanyl-N(6)-dimethylallyladenosine(37) in tRNA + (sulfur carrier)-H + 5'-deoxyadenosine + L-methionine + A + S-adenosyl-L-homocysteine + 2 H(+). The enzyme catalyses N(6)-dimethylallyladenosine(37) in tRNA + (sulfur carrier)-SH + AH2 + S-adenosyl-L-methionine = 2-thio-N(6)-dimethylallyladenosine(37) in tRNA + (sulfur carrier)-H + 5'-deoxyadenosine + L-methionine + A + H(+). It carries out the reaction 2-thio-N(6)-dimethylallyladenosine(37) in tRNA + S-adenosyl-L-methionine = 2-methylsulfanyl-N(6)-dimethylallyladenosine(37) in tRNA + S-adenosyl-L-homocysteine + H(+). Catalyzes the methylthiolation of N6-(dimethylallyl)adenosine (i(6)A), leading to the formation of 2-methylthio-N6-(dimethylallyl)adenosine (ms(2)i(6)A) at position 37 in tRNAs that read codons beginning with uridine. This is tRNA-2-methylthio-N(6)-dimethylallyladenosine synthase from Salmonella typhimurium (strain LT2 / SGSC1412 / ATCC 700720).